Here is a 401-residue protein sequence, read N- to C-terminus: Adenosine 3'-phospho 5'-phosphosulfate transporter 2 (401 aa).

Asparagine 12 and asparagine 71 each carry an N-linked (GlcNAc...) asparagine glycan. 6 helical membrane-spanning segments follow: residues 78-98 (LTQF…YGYL), 111-131 (YGWY…LIEL), 147-167 (MIIA…LGYL), 170-190 (PTQV…GVFI), 200-220 (VSAA…DSTI), and 223-243 (NFNL…AVIG). Asparagine 254 carries N-linked (GlcNAc...) asparagine glycosylation. 4 helical membrane-spanning segments follow: residues 267–287 (IGFV…PAVT), 298–317 (GYAF…VLAL), 324–346 (LIAV…IFFA), and 349–369 (FTFQ…LNVY).

Belongs to the nucleotide-sugar transporter family. SLC35B subfamily.

It is found in the golgi apparatus membrane. It carries out the reaction 3'-phosphoadenylyl sulfate(in) + adenosine 3',5'-bisphosphate(out) = 3'-phosphoadenylyl sulfate(out) + adenosine 3',5'-bisphosphate(in). In terms of biological role, probably functions as a 3'-phosphoadenylyl sulfate:adenosine 3',5'-bisphosphate antiporter at the Golgi membranes. Mediates the transport from the cytosol into the lumen of the Golgi of 3'-phosphoadenylyl sulfate/adenosine 3'-phospho 5'-phosphosulfate (PAPS), a universal sulfuryl donor for sulfation events that take place in that compartment. This chain is Adenosine 3'-phospho 5'-phosphosulfate transporter 2, found in Pongo abelii (Sumatran orangutan).